We begin with the raw amino-acid sequence, 122 residues long: MIQPQTYLNVADNSGARELMCIRIIGASNRRYAHIGDVIVAVIKEAIPNSPLERSEVIRAVIVRTCKELKRNNGTIIRYDDNAAVVIDQEGNPKGTRVFGAIPRELRQLNFTKIVSLAPEVL.

The protein belongs to the universal ribosomal protein uL14 family. In terms of assembly, part of the 50S ribosomal subunit.

It is found in the plastid. It localises to the chloroplast. Binds to 23S rRNA. This is Large ribosomal subunit protein uL14c from Arabis hirsuta (Hairy rock-cress).